The following is a 123-amino-acid chain: Fluoride-specific ion channel FluC 1 (123 aa).

3 consecutive transmembrane segments (helical) span residues 33 to 53 (TFLI…LFGV), 59 to 79 (YGTM…TTFS), and 98 to 118 (VFYL…GAML). Na(+) is bound by residues glycine 73 and threonine 76.

The protein belongs to the fluoride channel Fluc/FEX (TC 1.A.43) family.

The protein localises to the cell inner membrane. The catalysed reaction is fluoride(in) = fluoride(out). Na(+) is not transported, but it plays an essential structural role and its presence is essential for fluoride channel function. In terms of biological role, fluoride-specific ion channel. Important for reducing fluoride concentration in the cell, thus reducing its toxicity. The protein is Fluoride-specific ion channel FluC 1 of Brucella melitensis biotype 1 (strain ATCC 23456 / CCUG 17765 / NCTC 10094 / 16M).